Consider the following 125-residue polypeptide: Large ribosomal subunit protein bL12 (125 aa).

This sequence belongs to the bacterial ribosomal protein bL12 family. As to quaternary structure, homodimer. Part of the ribosomal stalk of the 50S ribosomal subunit. Forms a multimeric L10(L12)X complex, where L10 forms an elongated spine to which 2 to 4 L12 dimers bind in a sequential fashion. Binds GTP-bound translation factors.

Forms part of the ribosomal stalk which helps the ribosome interact with GTP-bound translation factors. Is thus essential for accurate translation. This is Large ribosomal subunit protein bL12 from Campylobacter jejuni subsp. jejuni serotype O:2 (strain ATCC 700819 / NCTC 11168).